The following is a 326-amino-acid chain: Phosphatidylinositol:ceramide inositolphosphotransferase (326 aa).

Helical transmembrane passes span 33 to 53, 82 to 102, 115 to 135, 169 to 189, 199 to 219, and 222 to 242; these read LLLA…GVHY, SVFT…FIYH, VLAF…STQL, VLFG…LVFV, RLIK…IIAS, and HYSV…FFID. Histidine 181 is an active-site residue. Catalysis depends on residues histidine 222 and aspartate 226. A disordered region spans residues 306–326; the sequence is MNGKHGEDINHTLSDATPNGT. The span at 316 to 326 shows a compositional bias: polar residues; that stretch reads HTLSDATPNGT.

This sequence belongs to the sphingomyelin synthase family.

It localises to the golgi apparatus. It is found in the trans-Golgi network membrane. Functionally, catalyzes the transfer of the phosphorylinositol group from phosphatidylinositol (PI) to phytoceramide, an essential step in sphingolipid biosynthesis. May play an important role in modulating plant programmed cell death (PCD) associated with defense (e.g. toward Golovinomyces cichoracearum) by promoting sphingolipid metabolism and regulating ceramide accumulation. This chain is Phosphatidylinositol:ceramide inositolphosphotransferase (ERH1), found in Oryza sativa subsp. indica (Rice).